A 424-amino-acid polypeptide reads, in one-letter code: Na(+)/H(+) antiporter NhaP (424 aa).

12 consecutive transmembrane segments (helical) span residues 3-23 (DLVA…YRFI), 25-45 (LPPT…VQGL), 66-86 (FSEV…ALHV), 96-116 (WPIG…IGGL), 130-152 (FIYC…LGIL), 170-190 (LFND…LQLG), 200-220 (ILFV…GYGV), 246-266 (ALAA…GLII), 296-316 (ALLF…WLHV), 320-340 (FALG…AILV), 358-378 (ILVW…SLPL), and 384-404 (LILS…GLSI).

The protein belongs to the monovalent cation:proton antiporter 1 (CPA1) transporter (TC 2.A.36) family.

It is found in the cell inner membrane. Inhibited by amiloride. Functionally, na(+)/H(+) antiporter that extrudes sodium in exchange for external protons. Also has weak Li(+)/H(+) antiport activity. In Pseudomonas aeruginosa (strain ATCC 15692 / DSM 22644 / CIP 104116 / JCM 14847 / LMG 12228 / 1C / PRS 101 / PAO1), this protein is Na(+)/H(+) antiporter NhaP (nhaP).